The sequence spans 150 residues: NmrA-like family domain-containing protein 1 (150 aa).

Residues 7-12 (GATGAQ), 33-37 (RNPEQ), and K71 each bind NADP(+).

The protein belongs to the NmrA-type oxidoreductase family. Homodimer. Interacts with ASS1. Interaction is enhanced by low NADPH/NADP(+) ratios, which results in inhibition of ASS1 activity.

The protein resides in the cytoplasm. It is found in the perinuclear region. It localises to the nucleus. Functionally, redox sensor protein. Undergoes restructuring and subcellular redistribution in response to changes in intracellular NADPH/NADP(+) levels. At low NADPH concentrations the protein is found mainly as a monomer, and binds argininosuccinate synthase (ASS1), the enzyme involved in nitric oxide synthesis. Association with ASS1 impairs its activity and reduces the production of nitric oxide, which subsecuently prevents apoptosis. Under normal NADPH concentrations, the protein is found as a dimer and hides the binding site for ASS1. The homodimer binds one molecule of NADPH. Has higher affinity for NADPH than for NADP(+). Binding to NADPH is necessary to form a stable dimer. This chain is NmrA-like family domain-containing protein 1, found in Rattus norvegicus (Rat).